Here is a 141-residue protein sequence, read N- to C-terminus: Nucleoside diphosphate kinase (141 aa).

ATP is bound by residues lysine 11, phenylalanine 59, arginine 87, threonine 93, arginine 104, and asparagine 114. Histidine 117 (pros-phosphohistidine intermediate) is an active-site residue.

The protein belongs to the NDK family. As to quaternary structure, homotetramer. Requires Mg(2+) as cofactor.

The protein localises to the cytoplasm. It catalyses the reaction a 2'-deoxyribonucleoside 5'-diphosphate + ATP = a 2'-deoxyribonucleoside 5'-triphosphate + ADP. The catalysed reaction is a ribonucleoside 5'-diphosphate + ATP = a ribonucleoside 5'-triphosphate + ADP. Functionally, major role in the synthesis of nucleoside triphosphates other than ATP. The ATP gamma phosphate is transferred to the NDP beta phosphate via a ping-pong mechanism, using a phosphorylated active-site intermediate. The sequence is that of Nucleoside diphosphate kinase from Legionella pneumophila (strain Lens).